We begin with the raw amino-acid sequence, 205 residues long: Methylthioribulose-1-phosphate dehydratase (205 aa).

2 residues coordinate Zn(2+): histidine 94 and histidine 96.

It belongs to the aldolase class II family. MtnB subfamily. It depends on Zn(2+) as a cofactor.

It catalyses the reaction 5-(methylsulfanyl)-D-ribulose 1-phosphate = 5-methylsulfanyl-2,3-dioxopentyl phosphate + H2O. It functions in the pathway amino-acid biosynthesis; L-methionine biosynthesis via salvage pathway; L-methionine from S-methyl-5-thio-alpha-D-ribose 1-phosphate: step 2/6. In terms of biological role, catalyzes the dehydration of methylthioribulose-1-phosphate (MTRu-1-P) into 2,3-diketo-5-methylthiopentyl-1-phosphate (DK-MTP-1-P). In Pectobacterium atrosepticum (strain SCRI 1043 / ATCC BAA-672) (Erwinia carotovora subsp. atroseptica), this protein is Methylthioribulose-1-phosphate dehydratase.